Reading from the N-terminus, the 291-residue chain is Glycolipid transfer protein domain-containing protein 2 (291 aa).

Asparagine 276 carries N-linked (GlcNAc...) asparagine glycosylation.

The protein belongs to the GLTP family.

The protein is Glycolipid transfer protein domain-containing protein 2 (GLTPD2) of Homo sapiens (Human).